We begin with the raw amino-acid sequence, 142 residues long: Hemoglobin subunit alpha (142 aa).

The Globin domain maps to 2–142; the sequence is VLSPADKTNI…VSTVLTSKYR (141 aa). Ser-4 is modified (phosphoserine). Lys-8 carries the N6-succinyllysine modification. Phosphothreonine is present on Thr-9. Lys-12 is modified (N6-succinyllysine). Residue Lys-17 is modified to N6-acetyllysine; alternate. An N6-succinyllysine; alternate modification is found at Lys-17. Tyr-25 carries the phosphotyrosine modification. Ser-36 bears the Phosphoserine mark. Lys-41 is subject to N6-succinyllysine. A Phosphoserine modification is found at Ser-50. His-59 serves as a coordination point for O2. His-88 lines the heme b pocket. The residue at position 103 (Ser-103) is a Phosphoserine. Thr-109 is modified (phosphothreonine). Ser-125 carries the post-translational modification Phosphoserine. Phosphothreonine is present on residues Thr-135 and Thr-138. Phosphoserine is present on Ser-139.

The protein belongs to the globin family. Heterotetramer of two alpha chains and two beta chains. As to expression, red blood cells.

Its function is as follows. Involved in oxygen transport from the lung to the various peripheral tissues. Functionally, hemopressin acts as an antagonist peptide of the cannabinoid receptor CNR1. Hemopressin-binding efficiently blocks cannabinoid receptor CNR1 and subsequent signaling. This Canis latrans (Coyote) protein is Hemoglobin subunit alpha (HBA).